Consider the following 189-residue polypeptide: Large ribosomal subunit protein bL17 (189 aa).

The disordered stretch occupies residues 136-189 (KAAPAAEEEVVETEEAPAVEAEAAESEEAPAAEAEAAEAEAAETEEAPAAEDKK). Positions 141-189 (AEEEVVETEEAPAVEAEAAESEEAPAAEAEAAEAEAAETEEAPAAEDKK) are enriched in acidic residues.

This sequence belongs to the bacterial ribosomal protein bL17 family. As to quaternary structure, part of the 50S ribosomal subunit. Contacts protein L32.

This is Large ribosomal subunit protein bL17 from Paenarthrobacter aurescens (strain TC1).